The chain runs to 380 residues: Chorismate synthase (380 aa).

Arg-47 contacts NADP(+). Residues 124-126, Gly-288, 303-307, and Arg-329 contribute to the FMN site; these read RSS and KPTST.

Belongs to the chorismate synthase family. As to quaternary structure, homotetramer. Requires FMNH2 as cofactor.

The catalysed reaction is 5-O-(1-carboxyvinyl)-3-phosphoshikimate = chorismate + phosphate. Its pathway is metabolic intermediate biosynthesis; chorismate biosynthesis; chorismate from D-erythrose 4-phosphate and phosphoenolpyruvate: step 7/7. In terms of biological role, catalyzes the anti-1,4-elimination of the C-3 phosphate and the C-6 proR hydrogen from 5-enolpyruvylshikimate-3-phosphate (EPSP) to yield chorismate, which is the branch point compound that serves as the starting substrate for the three terminal pathways of aromatic amino acid biosynthesis. This reaction introduces a second double bond into the aromatic ring system. The polypeptide is Chorismate synthase (Leptospira borgpetersenii serovar Hardjo-bovis (strain JB197)).